Reading from the N-terminus, the 78-residue chain is Large ribosomal subunit protein bL28 (78 aa).

The interval 1 to 25 (MSRVCQVTGKRPAVGNNRSHARNAT) is disordered.

The protein belongs to the bacterial ribosomal protein bL28 family.

This Vibrio vulnificus (strain CMCP6) protein is Large ribosomal subunit protein bL28.